The chain runs to 219 residues: Probable nicotinate-nucleotide adenylyltransferase (219 aa).

It belongs to the NadD family.

The enzyme catalyses nicotinate beta-D-ribonucleotide + ATP + H(+) = deamido-NAD(+) + diphosphate. The protein operates within cofactor biosynthesis; NAD(+) biosynthesis; deamido-NAD(+) from nicotinate D-ribonucleotide: step 1/1. Catalyzes the reversible adenylation of nicotinate mononucleotide (NaMN) to nicotinic acid adenine dinucleotide (NaAD). This chain is Probable nicotinate-nucleotide adenylyltransferase, found in Pseudomonas putida (strain W619).